Reading from the N-terminus, the 222-residue chain is Protein GrpE (222 aa).

The interval 1–21 is disordered; sequence MSDEKNKFTDASFENCDLKNP.

Belongs to the GrpE family. In terms of assembly, homodimer.

The protein resides in the cytoplasm. Its function is as follows. Participates actively in the response to hyperosmotic and heat shock by preventing the aggregation of stress-denatured proteins, in association with DnaK and GrpE. It is the nucleotide exchange factor for DnaK and may function as a thermosensor. Unfolded proteins bind initially to DnaJ; upon interaction with the DnaJ-bound protein, DnaK hydrolyzes its bound ATP, resulting in the formation of a stable complex. GrpE releases ADP from DnaK; ATP binding to DnaK triggers the release of the substrate protein, thus completing the reaction cycle. Several rounds of ATP-dependent interactions between DnaJ, DnaK and GrpE are required for fully efficient folding. In Bartonella tribocorum (strain CIP 105476 / IBS 506), this protein is Protein GrpE.